Reading from the N-terminus, the 328-residue chain is Formimidoylglutamase (328 aa).

Positions 133, 159, 161, 163, 253, and 255 each coordinate Mn(2+).

Belongs to the arginase family. Requires Mn(2+) as cofactor.

The catalysed reaction is N-formimidoyl-L-glutamate + H2O = formamide + L-glutamate. It functions in the pathway amino-acid degradation; L-histidine degradation into L-glutamate; L-glutamate from N-formimidoyl-L-glutamate (hydrolase route): step 1/1. Catalyzes the conversion of N-formimidoyl-L-glutamate to L-glutamate and formamide. The polypeptide is Formimidoylglutamase (Streptococcus pyogenes serotype M3 (strain ATCC BAA-595 / MGAS315)).